The sequence spans 901 residues: HTH-type transcriptional regulator MalT (901 aa).

39–46 (SPAGYGKT) provides a ligand contact to ATP. The region spanning 829–894 (ELIRTSPLTQ…DAVQHAQQLL (66 aa)) is the HTH luxR-type domain. The segment at residues 853–872 (NEQIAGELAVAATTIKTHIR) is a DNA-binding region (H-T-H motif).

Belongs to the MalT family. Monomer in solution. Oligomerizes to an active state in the presence of the positive effectors ATP and maltotriose.

Activated by ATP and maltotriose, which are both required for DNA binding. Positively regulates the transcription of the maltose regulon whose gene products are responsible for uptake and catabolism of malto-oligosaccharides. Specifically binds to the promoter region of its target genes, recognizing a short DNA motif called the MalT box. The chain is HTH-type transcriptional regulator MalT from Salmonella agona (strain SL483).